Reading from the N-terminus, the 141-residue chain is Putative pre-16S rRNA nuclease (141 aa).

Belongs to the YqgF nuclease family.

Its subcellular location is the cytoplasm. Its function is as follows. Could be a nuclease involved in processing of the 5'-end of pre-16S rRNA. This chain is Putative pre-16S rRNA nuclease, found in Shewanella denitrificans (strain OS217 / ATCC BAA-1090 / DSM 15013).